The sequence spans 262 residues: Putative hydro-lyase RHA1_ro03475 (262 aa).

The protein belongs to the D-glutamate cyclase family.

The sequence is that of Putative hydro-lyase RHA1_ro03475 from Rhodococcus jostii (strain RHA1).